The sequence spans 162 residues: Caveolin-2 (162 aa).

Topologically, residues 1-86 (MGLETEKADV…FEISKYVMYK (86 aa)) are cytoplasmic. Y19 bears the Phosphotyrosine; by SRC mark. A Phosphoserine modification is found at S20. Y27 carries the post-translational modification Phosphotyrosine; by SRC. Position 36 is a phosphoserine (S36). Residues 87-107 (FLTVFLAIPLAFAAGILFATL) constitute an intramembrane region (helical). The Cytoplasmic segment spans residues 108-162 (SCLHIWIIMPFVKTCLMVLPSVQTIWKSVTDVIIAPLCTSVGRSLSSISLQLSHD).

The protein belongs to the caveolin family. As to quaternary structure, monomer or homodimer. Interacts with CAV1; the interaction forms a stable heterooligomeric complex that is required for targeting to lipid rafts and for caveolae formation. Tyrosine phosphorylated forms do not form heterooligomers with the Tyr-19-phosphorylated form existing as a monomer or dimer, and the Tyr-27-form as a monomer only. Interacts (tyrosine phosphorylated form) with the SH2 domain-containing proteins, RASA1, NCK1 and SRC. Interacts (tyrosine phosphorylated form) with INSR, the interaction (Tyr-27-phosphorylated form) is increased on insulin stimulation. Interacts (Tyr-19 phosphorylated form) with MAPK1 (phosphorylated form); the interaction, promoted by insulin, leads to nuclear location and MAPK1 activation. Interacts with STAT3; the interaction is increased on insulin-induced tyrosine phosphorylation leading to STAT activation. In terms of processing, phosphorylated on serine and tyrosine residues. Phosphorylation on Ser-36 appears to modulate mitosis in endothelial cells. Phosphorylation on both Tyr-19 and Tyr-27 is required for insulin-induced 'Ser-727' phosphorylation of STAT3 and its activation. Phosphorylation on Tyr-19 is required for insulin-induced phosphorylation of MAPK1 and DNA binding of STAT3. Tyrosine phosphorylation is induced by both EGF and insulin.

The protein localises to the nucleus. It localises to the cytoplasm. It is found in the golgi apparatus membrane. Its subcellular location is the cell membrane. The protein resides in the membrane. The protein localises to the caveola. Functionally, may act as a scaffolding protein within caveolar membranes. Interacts directly with G-protein alpha subunits and can functionally regulate their activity. Acts as an accessory protein in conjunction with CAV1 in targeting to lipid rafts and driving caveolae formation. The Ser-36 phosphorylated form has a role in modulating mitosis in endothelial cells. Positive regulator of cellular mitogenesis of the MAPK signaling pathway. Required for the insulin-stimulated nuclear translocation and activation of MAPK1 and STAT3, and the subsequent regulation of cell cycle progression. This is Caveolin-2 (CAV2) from Eulemur macaco macaco (Black lemur).